We begin with the raw amino-acid sequence, 83 residues long: Apolipoprotein C-I, acidic form (83 aa).

An N-terminal signal peptide occupies residues 1-26 (MRLFLSLPVLVVVLSMVLEGPAPAQG).

The protein belongs to the apolipoprotein C1 family.

It is found in the secreted. This Gorilla gorilla gorilla (Western lowland gorilla) protein is Apolipoprotein C-I, acidic form (APOC1A).